The primary structure comprises 505 residues: MTTFTKLSEQETPSISVHASRRISKINPNIYAGFTEHMGRCIYGGIYDPGNPLSDENGFRKDVLEALKELNIPVIRYPGGNFTATYHWIDGVGPKDQRPARPELAWLGTETNHFGTDEFMKWCELLGTEPYFCLNFGTGTLDEALAWVEYCNGTKDTYYANLRRKNGREEPYNIKYWALGNEVWGPWQVAQMTKEEYAHKAYQWAKALKLLDPSLKLILCGQDGTASWDYYTLKQCLLPAHSPLSTSTVPLIDMHSIHMYTCGSTHLPNVTAPLAAERAIEITSSLIDLAMIENGIPPDQPRPTICFDEWNVWDPLRAEGSKGAEESYTLSDALAVAIWLNVFVRKSKDVGMACIAQSVNVISPLMTTKDGIIKQTIWWPLYLFSKYMRGWTINAHVSCGAYEGETSPKWIRAVKDTPWLDVSATLGEDGYANVAVVNISDEKDMECKFEGATGDVTVFTVTGDSVSACNMKGKEEVGLTESTWDGKGAYKFPRHSLTLLRWKAE.

Asn-81, Asn-152, Asn-269, and Asn-438 each carry an N-linked (GlcNAc...) asparagine glycan.

The protein belongs to the glycosyl hydrolase 51 family.

It localises to the secreted. It catalyses the reaction Hydrolysis of terminal non-reducing alpha-L-arabinofuranoside residues in alpha-L-arabinosides.. The protein operates within glycan metabolism; L-arabinan degradation. In terms of biological role, alpha-L-arabinofuranosidase involved in the degradation of arabinoxylan, a major component of plant hemicellulose. Acts only on small linear 1,5-alpha-linked L-arabinofuranosyl oligosaccharides. The chain is Probable alpha-L-arabinofuranosidase C (abfC) from Aspergillus fumigatus (strain ATCC MYA-4609 / CBS 101355 / FGSC A1100 / Af293) (Neosartorya fumigata).